Here is a 324-residue protein sequence, read N- to C-terminus: Acetyl-coenzyme A carboxylase carboxyl transferase subunit alpha (324 aa).

The region spanning 37-291 (KLERRLDKLK…QNFILQEWLR (255 aa)) is the CoA carboxyltransferase C-terminal domain.

This sequence belongs to the AccA family. In terms of assembly, acetyl-CoA carboxylase is a heterohexamer composed of biotin carboxyl carrier protein (AccB), biotin carboxylase (AccC) and two subunits each of ACCase subunit alpha (AccA) and ACCase subunit beta (AccD).

The protein resides in the cytoplasm. It catalyses the reaction N(6)-carboxybiotinyl-L-lysyl-[protein] + acetyl-CoA = N(6)-biotinyl-L-lysyl-[protein] + malonyl-CoA. It participates in lipid metabolism; malonyl-CoA biosynthesis; malonyl-CoA from acetyl-CoA: step 1/1. Its function is as follows. Component of the acetyl coenzyme A carboxylase (ACC) complex. First, biotin carboxylase catalyzes the carboxylation of biotin on its carrier protein (BCCP) and then the CO(2) group is transferred by the carboxyltransferase to acetyl-CoA to form malonyl-CoA. The sequence is that of Acetyl-coenzyme A carboxylase carboxyl transferase subunit alpha from Chlamydia caviae (strain ATCC VR-813 / DSM 19441 / 03DC25 / GPIC) (Chlamydophila caviae).